Here is a 284-residue protein sequence, read N- to C-terminus: D-tagatose-1,6-bisphosphate aldolase subunit GatY (284 aa).

The active-site Proton donor is Asp-82. Residues His-83 and His-180 each coordinate Zn(2+). Gly-181 serves as a coordination point for dihydroxyacetone phosphate. His-208 contributes to the Zn(2+) binding site. Residues 209–211 and 230–233 each bind dihydroxyacetone phosphate; these read GAS and NVAT.

It belongs to the class II fructose-bisphosphate aldolase family. TagBP aldolase GatY subfamily. Forms a complex with GatZ. The cofactor is Zn(2+).

It carries out the reaction D-tagatofuranose 1,6-bisphosphate = D-glyceraldehyde 3-phosphate + dihydroxyacetone phosphate. It participates in carbohydrate metabolism; D-tagatose 6-phosphate degradation; D-glyceraldehyde 3-phosphate and glycerone phosphate from D-tagatose 6-phosphate: step 2/2. Functionally, catalytic subunit of the tagatose-1,6-bisphosphate aldolase GatYZ, which catalyzes the reversible aldol condensation of dihydroxyacetone phosphate (DHAP or glycerone-phosphate) with glyceraldehyde 3-phosphate (G3P) to produce tagatose 1,6-bisphosphate (TBP). Requires GatZ subunit for full activity and stability. Is involved in the catabolism of galactitol. This chain is D-tagatose-1,6-bisphosphate aldolase subunit GatY, found in Klebsiella pneumoniae subsp. pneumoniae (strain ATCC 700721 / MGH 78578).